A 3598-amino-acid chain; its full sequence is Dystrophin, isoforms A/C/F/G/H (3598 aa).

The segment at 1 to 230 (MEPGILIDER…YVMCLYHAME (230 aa)) is actin-binding. 2 Calponin-homology (CH) domains span residues 12–116 (HIQK…LEFN) and 127–230 (NGVE…HAME). A disordered region spans residues 233–297 (RTRQQEQEQD…SGELKTHSMR (65 aa)). Positions 267–286 (NDQTSLGLYTSDSAGSMEQR) are enriched in polar residues. 6 Spectrin repeats span residues 307-420 (VEIS…KILM), 423-525 (AEFQ…KLQQ), 851-963 (QDFG…AIEN), 1056-1170 (SHID…LLEH), 1173-1275 (TQLG…LLEQ), and 1381-1483 (SYES…TLER). Disordered regions lie at residues 1633-1696 (ARNT…VMPD), 1716-1742 (SLNPQKVTNTPPPKPAKTKRKAPSSPA), 1799-1854 (EDSD…ENTS), 1878-1941 (RDIL…EPLV), and 2204-2233 (GPRISNGKERPDASSAATMSCRSEYNNEPS). A compositionally biased stretch (low complexity) spans 1663–1679 (SGESPSSAHTSSSESPT). A compositionally biased stretch (basic and acidic residues) spans 1803-1816 (SSVRVDSQGKEMRR). 2 positions are modified to phosphoserine: Ser-1832 and Ser-1838. The span at 1834–1843 (NDEDSAEQEE) shows a compositional bias: acidic residues. The span at 1878–1893 (RDILRDSEEEEPKTPD) shows a compositional bias: basic and acidic residues. A compositionally biased stretch (polar residues) spans 2218–2233 (SAATMSCRSEYNNEPS). Spectrin repeat units lie at residues 2237 to 2363 (ALAG…QLKN), 2366 to 2472 (SDSQ…QLHA), 2475 to 2576 (HSLQ…RLES), 2579 to 2712 (EHWN…RLDE), and 2715 to 2819 (TKMR…VLCQ). Residues 2655-2679 (VSDTSDTEANHDSDSRYMSAEEQSR) are disordered. Residues 2822-2852 (AQQTHENGDDGRTTSNSGTIGPLPNLGQSVK) form a disordered region. In terms of domain architecture, WW spans 2849-2882 (QSVKPPWERATTAANVPYYIDHERETTHWDHPEM). The ZZ-type zinc-finger motif lies at 3107-3163 (KHQAKCNICKEYPIVGFRYRCLKCFNFDMCQKCFFFGRNAKNHKLTHPMHEYCTTTT). Zn(2+) is bound by residues Cys-3112, Cys-3115, Cys-3127, Cys-3130, Cys-3136, Cys-3139, His-3149, and His-3153. A Phosphoserine modification is found at Ser-3207. 4 disordered regions span residues 3316–3344 (EQSGMPEDSNGMQHSSSSMTGLSGQGEQG), 3387–3449 (DEPN…KGIM), 3483–3545 (LHQQ…QQHL), and 3560–3598 (ELESINDDLEDSSSSNTTNTTTTTTTTATTEKTCVELQK). 2 stretches are compositionally biased toward polar residues: residues 3325–3337 (NGMQHSSSSMTGL) and 3408–3439 (ALNSKPNTLQTRSVTASQLNTDSPAKMNQQNG). The span at 3485–3499 (QQQQQQLQQQPPQQQ) shows a compositional bias: low complexity. The segment covering 3505–3523 (GNGGMDISGGMQTSGGYLG) has biased composition (gly residues). Residues 3534-3545 (SSLMQQQHQQHL) are compositionally biased toward low complexity. Acidic residues predominate over residues 3560–3570 (ELESINDDLED). Over residues 3571 to 3589 (SSSSNTTNTTTTTTTTATT) the composition is skewed to low complexity.

In terms of assembly, component of the dystrophin associated protein complex (DAPC). Interacts with Dg, via the Dg WW domain binding sites. Isoform A, isoform F and isoform G are expressed in the midgut endoderm of stage 12 embryos. In stage 16 embryos, expression is also seen in the pericardial cells, cells at the ectoderm segmental border and cells along the midline of the CNS. During embryogenesis, isoform A is also expressed in the visceral mesoderm, muscle attachment sites, mesectodermal cells at the midline, the gut, and throughout muscle fibers. In larvae, isoform A is found in all muscle fibers, but not detectable in the brain or neuropil.

The protein localises to the cell membrane. Its subcellular location is the sarcolemma. The protein resides in the cytoplasm. It is found in the cytoskeleton. In terms of biological role, required for the maintenance of appropriate synaptic retrograde communication and the stabilization of muscle cell architecture or physiology. Both det and Dg are required for maintenance of early dpp signaling in the presumptive crossvein. Isoform A is not required to maintain muscle integrity, but plays a role in neuromuscular homeostasis by regulating neurotransmitter release. May play a role in anchoring the cytoskeleton to the plasma membrane. The protein is Dystrophin, isoforms A/C/F/G/H (Dys) of Drosophila melanogaster (Fruit fly).